Reading from the N-terminus, the 210-residue chain is Thymidylate kinase (210 aa).

10 to 17 (GIDGCGKT) contributes to the ATP binding site.

This sequence belongs to the thymidylate kinase family.

It catalyses the reaction dTMP + ATP = dTDP + ADP. Its function is as follows. Phosphorylation of dTMP to form dTDP in both de novo and salvage pathways of dTTP synthesis. The polypeptide is Thymidylate kinase (Prochlorococcus marinus (strain MIT 9515)).